A 388-amino-acid polypeptide reads, in one-letter code: Chorismate synthase (388 aa).

Residues Arg39 and Arg45 each contribute to the NADP(+) site. Residues 132-134 (RSS), 251-252 (NA), Gly296, 311-315 (KPIPT), and Arg337 contribute to the FMN site.

It belongs to the chorismate synthase family. As to quaternary structure, homotetramer. Requires FMNH2 as cofactor.

The enzyme catalyses 5-O-(1-carboxyvinyl)-3-phosphoshikimate = chorismate + phosphate. It participates in metabolic intermediate biosynthesis; chorismate biosynthesis; chorismate from D-erythrose 4-phosphate and phosphoenolpyruvate: step 7/7. Functionally, catalyzes the anti-1,4-elimination of the C-3 phosphate and the C-6 proR hydrogen from 5-enolpyruvylshikimate-3-phosphate (EPSP) to yield chorismate, which is the branch point compound that serves as the starting substrate for the three terminal pathways of aromatic amino acid biosynthesis. This reaction introduces a second double bond into the aromatic ring system. The sequence is that of Chorismate synthase from Staphylococcus aureus (strain bovine RF122 / ET3-1).